The chain runs to 329 residues: Beta-ketoacyl-[acyl-carrier-protein] synthase III (329 aa).

Active-site residues include Cys-123 and His-256. An ACP-binding region spans residues 257-261; sequence QANIR. The active site involves Asn-286.

This sequence belongs to the thiolase-like superfamily. FabH family. Homodimer.

The protein localises to the cytoplasm. The catalysed reaction is malonyl-[ACP] + acetyl-CoA + H(+) = 3-oxobutanoyl-[ACP] + CO2 + CoA. It functions in the pathway lipid metabolism; fatty acid biosynthesis. Functionally, catalyzes the condensation reaction of fatty acid synthesis by the addition to an acyl acceptor of two carbons from malonyl-ACP. Catalyzes the first condensation reaction which initiates fatty acid synthesis and may therefore play a role in governing the total rate of fatty acid production. Possesses both acetoacetyl-ACP synthase and acetyl transacylase activities. Its substrate specificity determines the biosynthesis of branched-chain and/or straight-chain of fatty acids. This Paraburkholderia phymatum (strain DSM 17167 / CIP 108236 / LMG 21445 / STM815) (Burkholderia phymatum) protein is Beta-ketoacyl-[acyl-carrier-protein] synthase III.